Here is a 118-residue protein sequence, read N- to C-terminus: MIHGIGTDIVYIPRVSRILQKYGEKFLNRIYTEKEIELSRKYNSQEMRARYFAKRFAAKEAFVKARGSGQGIIMKDIEIYNDVRGKPYLTVSKDFISKIHLSLSDDGDYATAFVVICV.

Mg(2+) is bound by residues Asp8 and Glu60.

It belongs to the P-Pant transferase superfamily. AcpS family. It depends on Mg(2+) as a cofactor.

It localises to the cytoplasm. It carries out the reaction apo-[ACP] + CoA = holo-[ACP] + adenosine 3',5'-bisphosphate + H(+). Its function is as follows. Transfers the 4'-phosphopantetheine moiety from coenzyme A to a Ser of acyl-carrier-protein. In Wolbachia sp. subsp. Drosophila simulans (strain wRi), this protein is Holo-[acyl-carrier-protein] synthase.